The following is a 197-amino-acid chain: Imidazoleglycerol-phosphate dehydratase (197 aa).

The protein belongs to the imidazoleglycerol-phosphate dehydratase family.

Its subcellular location is the cytoplasm. The enzyme catalyses D-erythro-1-(imidazol-4-yl)glycerol 3-phosphate = 3-(imidazol-4-yl)-2-oxopropyl phosphate + H2O. The protein operates within amino-acid biosynthesis; L-histidine biosynthesis; L-histidine from 5-phospho-alpha-D-ribose 1-diphosphate: step 6/9. This chain is Imidazoleglycerol-phosphate dehydratase, found in Novosphingobium aromaticivorans (strain ATCC 700278 / DSM 12444 / CCUG 56034 / CIP 105152 / NBRC 16084 / F199).